Reading from the N-terminus, the 680-residue chain is DNA-directed RNA polymerase subunit beta' (680 aa).

The Zn(2+) site is built by Cys-69, Cys-71, Cys-87, and Cys-90. Residues Asp-489, Asp-491, and Asp-493 each contribute to the Mg(2+) site.

The protein belongs to the RNA polymerase beta' chain family. RpoC1 subfamily. As to quaternary structure, in plastids the minimal PEP RNA polymerase catalytic core is composed of four subunits: alpha, beta, beta', and beta''. When a (nuclear-encoded) sigma factor is associated with the core the holoenzyme is formed, which can initiate transcription. The cofactor is Mg(2+). Zn(2+) is required as a cofactor.

The protein resides in the plastid. It is found in the chloroplast. It catalyses the reaction RNA(n) + a ribonucleoside 5'-triphosphate = RNA(n+1) + diphosphate. In terms of biological role, DNA-dependent RNA polymerase catalyzes the transcription of DNA into RNA using the four ribonucleoside triphosphates as substrates. The polypeptide is DNA-directed RNA polymerase subunit beta' (Capsella bursa-pastoris (Shepherd's purse)).